A 277-amino-acid chain; its full sequence is 2,3,4,5-tetrahydropyridine-2,6-dicarboxylate N-succinyltransferase (277 aa).

Residues arginine 106 and aspartate 143 each contribute to the substrate site.

The protein belongs to the transferase hexapeptide repeat family. As to quaternary structure, homotrimer.

Its subcellular location is the cytoplasm. The enzyme catalyses (S)-2,3,4,5-tetrahydrodipicolinate + succinyl-CoA + H2O = (S)-2-succinylamino-6-oxoheptanedioate + CoA. It functions in the pathway amino-acid biosynthesis; L-lysine biosynthesis via DAP pathway; LL-2,6-diaminopimelate from (S)-tetrahydrodipicolinate (succinylase route): step 1/3. In Xylella fastidiosa (strain Temecula1 / ATCC 700964), this protein is 2,3,4,5-tetrahydropyridine-2,6-dicarboxylate N-succinyltransferase.